Reading from the N-terminus, the 747-residue chain is Mediator of RNA polymerase II transcription subunit 25 (747 aa).

Positions 1–226 (MVPGSEGPAR…PRHMVLVRGL (226 aa)) are interaction with the Mediator complex. Disordered stretches follow at residues 233–274 (GSAP…QYQV) and 299–390 (LGPR…PALG). 2 stretches are compositionally biased toward pro residues: residues 263–272 (QPLPPVPPQY) and 326–342 (PQLP…PPAS). The segment at 389–543 (LGGQQSVSNK…VNGIRQVITN (155 aa)) is interaction with VP16. Positions 395-545 (VSNKLLAWSG…GIRQVITNHK (151 aa)) are interaction with CREBBP. The tract at residues 548 to 747 (QQQKLEQQQR…MEDDILMDLI (200 aa)) is disordered. Interaction with RARA stretches follow at residues 564-653 (APPG…LLNP) and 640-707 (PGAN…WPAQ). The segment covering 598–611 (ASGATGQPQPQGTA) has biased composition (low complexity). A compositionally biased stretch (pro residues) spans 612 to 634 (QPPPGAPQGPPGAASGPPPPGPI). The short motif at 646–650 (LRSLL) is the LXXLL motif element. 3 stretches are compositionally biased toward pro residues: residues 652–664 (NPPP…PPPQ), 673–683 (PGAPALLPPPH), and 691–713 (LGPP…PRAP). Position 725 is an asymmetric dimethylarginine (R725). A compositionally biased stretch (acidic residues) spans 738–747 (MEDDILMDLI).

This sequence belongs to the Mediator complex subunit 25 family. As to quaternary structure, component of the Mediator complex, which is composed of MED1, MED4, MED6, MED7, MED8, MED9, MED10, MED11, MED12, MED13, MED13L, MED14, MED15, MED16, MED17, MED18, MED19, MED20, MED21, MED22, MED23, MED24, MED25, MED26, MED27, MED29, MED30, MED31, CCNC, CDK8 and CDC2L6/CDK11. The MED12, MED13, CCNC and CDK8 subunits form a distinct module termed the CDK8 module. Mediator containing the CDK8 module is less active than Mediator lacking this module in supporting transcriptional activation. Individual preparations of the Mediator complex lacking one or more distinct subunits have been variously termed ARC, CRSP, DRIP, PC2, SMCC and TRAP. Interacts with CREBBP. Interacts with ESR1, GR, RARA, RXRA and THRB in a ligand-dependent fashion. Binds the Herpes simplex virus activator VP16. Ubiquitously expressed. Highest levels in brain, heart, kidney, peripheral leukocytes, placenta, skeletal muscle and spleen.

It localises to the nucleus. Component of the Mediator complex, a coactivator involved in the regulated transcription of nearly all RNA polymerase II-dependent genes. Mediator functions as a bridge to convey information from gene-specific regulatory proteins to the basal RNA polymerase II transcription machinery. Mediator is recruited to promoters by direct interactions with regulatory proteins and serves as a scaffold for the assembly of a functional preinitiation complex with RNA polymerase II and the general transcription factors. Required for RARA/RXRA-mediated transcription. This Homo sapiens (Human) protein is Mediator of RNA polymerase II transcription subunit 25 (MED25).